The sequence spans 310 residues: Cell division protein FtsQ (310 aa).

The segment at 1–57 is disordered; it reads MSEPENTAEDKDAEAAISADAVESETTADGGENPAEGESAEGPRMRARRERMERREA. The Cytoplasmic portion of the chain corresponds to 1-95; sequence MSEPENTAED…AGRGKVQGLQ (95 aa). Residues 96–116 form a helical membrane-spanning segment; the sequence is TLLLVVLLALIAVGLGSILYF. Over 117–310 the chain is Extracellular; sequence TPLMSVRQTV…VSSPDLPTVK (194 aa). One can recognise a POTRA domain in the interval 120–188; it reads MSVRQTVVTG…STLRVTIVER (69 aa).

The protein belongs to the FtsQ/DivIB family. FtsQ subfamily.

The protein localises to the cell membrane. In terms of biological role, essential cell division protein. The polypeptide is Cell division protein FtsQ (Mycobacteroides abscessus (strain ATCC 19977 / DSM 44196 / CCUG 20993 / CIP 104536 / JCM 13569 / NCTC 13031 / TMC 1543 / L948) (Mycobacterium abscessus)).